The sequence spans 352 residues: MKHDWWLSAARPLDQTACALAAERQRRLTKPRGSLGRLERLAIHLAALQGRERPVVERPWIAIFAGDHGVAEEGVSPYPQAVTGQMLRNFATGGAAISVLARQLGAELELIDLGTAEPLEPPPAGVRRRHLGPGTANFLRGPAMSVRQGLDALAAGRDSVRRAQAAGAHLYIGGEMGIANTSSASALASALLEQPAAALVGPGTGLDAAGLARKVAVVERALALHGAHAGEPLEILRRLGGFEIAALAGAYLACAQEGLPALVDGFICSVAALLAVRLNPACRDWLLFAHRGAEPGHRRVLEALAAEPLLDLGLRLGEGSGAALAVPLLQSACRLHGEMATFAEAAVADAGR.

The active-site Proton acceptor is Glu318.

Belongs to the CobT family.

The catalysed reaction is 5,6-dimethylbenzimidazole + nicotinate beta-D-ribonucleotide = alpha-ribazole 5'-phosphate + nicotinate + H(+). It functions in the pathway nucleoside biosynthesis; alpha-ribazole biosynthesis; alpha-ribazole from 5,6-dimethylbenzimidazole: step 1/2. In terms of biological role, catalyzes the synthesis of alpha-ribazole-5'-phosphate from nicotinate mononucleotide (NAMN) and 5,6-dimethylbenzimidazole (DMB). The protein is Nicotinate-nucleotide--dimethylbenzimidazole phosphoribosyltransferase of Azotobacter vinelandii (strain DJ / ATCC BAA-1303).